We begin with the raw amino-acid sequence, 624 residues long: Chitin elicitor receptor kinase 1 (624 aa).

An N-terminal signal peptide occupies residues 1-18; sequence MEASTSLLVLVLAAAAFA. Topologically, residues 19-240 are extracellular; the sequence is AGTVTEAAGD…SPGKGASAGA (222 aa). Cystine bridges form between Cys30–Cys93, Cys34–Cys160, and Cys91–Cys158. Asn48 carries an N-linked (GlcNAc...) asparagine glycan. Chitin is bound at residue 115–121; sequence RGQIYTS. Residue Asn128 is glycosylated (N-linked (GlcNAc...) asparagine). Chitin is bound at residue 142-148; the sequence is PANNIPD. Residues Asn153 and Asn157 are each glycosylated (N-linked (GlcNAc...) asparagine). The LysM domain maps to 173-218; that stretch reads LTYPLRAEDTLASVAATYGLSSQLDVVRRYNPGMESATGSGIVYIP. Asn223 carries N-linked (GlcNAc...) asparagine glycosylation. A helical transmembrane segment spans residues 241–261; the sequence is IAGGVVAGVVVLAAIFLYIIF. The Cytoplasmic segment spans residues 262 to 624; that stretch reads YRRRKAKQAT…QGLVNLMSGR (363 aa). The region spanning 324-599 is the Protein kinase domain; sequence FSIGNKIGQG…RSVVVALMTL (276 aa). Residues 330–338 and Lys351 contribute to the ATP site; that span reads IGQGGFGAV. Asp443 (proton acceptor) is an active-site residue.

It belongs to the protein kinase superfamily. Ser/Thr protein kinase family. As to quaternary structure, homooligomer. Interacts with CEBIP. Interacts with LYP4 and LYP6. Interacts with RLCK176. Autophosphorylated; induced by chitin and derivatives. In terms of tissue distribution, expressed in seedlings, roots, shoots and stems, and, to a lower extent, in flowers.

It is found in the cell membrane. The enzyme catalyses L-seryl-[protein] + ATP = O-phospho-L-seryl-[protein] + ADP + H(+). The catalysed reaction is L-threonyl-[protein] + ATP = O-phospho-L-threonyl-[protein] + ADP + H(+). Its function is as follows. Lysin motif (LysM) receptor kinase required as a cell surface receptor for chitin elicitor (chitooligosaccharides) signaling leading to innate immunity in response to biotic stresses. Involved in the resistance to pathogenic fungi, probably by sensing microbe-associated molecular patterns (MAMP) and pathogen-associated molecular patterns (PAMP). Involved in the detection of microbial peptidoglycans (PGNs) and mediates PGN response. Plays dual roles in PGN and chitin signaling during innate immunity. Acts as an adapter for LYP4 and LYP6 and mediates signal transduction from the extracellular to intracellular spaces. Participates in the activation of defense genes during response to PGN and chitin. Phosphorylates the downstream partner RLCK185 in response to chitin elicitation. The protein is Chitin elicitor receptor kinase 1 of Oryza sativa subsp. japonica (Rice).